The chain runs to 431 residues: Argininosuccinate lyase (431 aa).

Belongs to the lyase 1 family. Argininosuccinate lyase subfamily.

Its subcellular location is the cytoplasm. The enzyme catalyses 2-(N(omega)-L-arginino)succinate = fumarate + L-arginine. The protein operates within amino-acid biosynthesis; L-arginine biosynthesis; L-arginine from L-ornithine and carbamoyl phosphate: step 3/3. This chain is Argininosuccinate lyase, found in Xanthomonas campestris pv. campestris (strain B100).